The sequence spans 60 residues: Large ribosomal subunit protein bL32 (60 aa).

A compositionally biased stretch (basic residues) spans 1 to 20 (MAVPKRKTSPSRRNMRRSHH). The interval 1–60 (MAVPKRKTSPSRRNMRRSHHALGANSFIEDKDTGELRRPHHVDLKTGMYNGKQILTPKED) is disordered. Over residues 28–44 (IEDKDTGELRRPHHVDL) the composition is skewed to basic and acidic residues.

It belongs to the bacterial ribosomal protein bL32 family.

This chain is Large ribosomal subunit protein bL32, found in Caulobacter vibrioides (strain ATCC 19089 / CIP 103742 / CB 15) (Caulobacter crescentus).